The following is a 349-amino-acid chain: Green-sensitive opsin-1 (349 aa).

At Met1–Lys36 the chain is on the extracellular side. N-linked (GlcNAc...) asparagine glycosylation is found at Asn2 and Asn15. Residues Phe37–Val61 form a helical membrane-spanning segment. Residues Thr62–Asn73 lie on the Cytoplasmic side of the membrane. The chain crosses the membrane as a helical span at residues Tyr74–Leu99. The Extracellular segment spans residues Val100 to Glu113. Cys110 and Cys187 form a disulfide bridge. The chain crosses the membrane as a helical span at residues Gly114–Ile133. The Cytoplasmic segment spans residues Glu134–His152. Residues Ala153 to Ser176 traverse the membrane as a helical segment. The Extracellular segment spans residues Arg177–Ser202. N-linked (GlcNAc...) asparagine glycosylation occurs at Asn200. Residues Tyr203 to Val230 traverse the membrane as a helical segment. Residues Lys231–Arg252 are Cytoplasmic-facing. The helical transmembrane segment at Met253 to Phe276 threads the bilayer. The Extracellular portion of the chain corresponds to Phe277–Ser284. The helical transmembrane segment at Ala285–Leu309 threads the bilayer. An N6-(retinylidene)lysine modification is found at Lys296. Residues Asn310–Ala349 are Cytoplasmic-facing. Positions Leu328 to Ala349 are disordered. Residues Ser334–Ala349 are compositionally biased toward low complexity.

The protein belongs to the G-protein coupled receptor 1 family. Opsin subfamily. Post-translationally, phosphorylated on some or all of the serine and threonine residues present in the C-terminal region. In terms of tissue distribution, retinal double cone accessory photoreceptor cell outer segments.

It localises to the membrane. In terms of biological role, visual pigments are the light-absorbing molecules that mediate vision. They consist of an apoprotein, opsin, covalently linked to cis-retinal. This is Green-sensitive opsin-1 (opn1mw1) from Danio rerio (Zebrafish).